The following is a 244-amino-acid chain: Flavin-dependent thymidylate synthase (244 aa).

Residues 2–207 (VRVTLVNYTK…DIRPIIKWAK (206 aa)) form the ThyX domain. FAD is bound by residues Ser-56, 80-82 (RHR), and Gln-88. DUMP-binding positions include 77–80 (QLVR), 88–92 (QQSQR), and Arg-146. A ThyX motif motif is present at residues 80–90 (RHRIASYTQQS). FAD-binding positions include 162–164 (NLR) and His-168. Residue Arg-173 coordinates dUMP. Arg-173 functions as the Involved in ionization of N3 of dUMP, leading to its activation in the catalytic mechanism.

This sequence belongs to the thymidylate synthase ThyX family. As to quaternary structure, homotetramer. FAD is required as a cofactor.

It carries out the reaction dUMP + (6R)-5,10-methylene-5,6,7,8-tetrahydrofolate + NADPH + H(+) = dTMP + (6S)-5,6,7,8-tetrahydrofolate + NADP(+). The protein operates within pyrimidine metabolism; dTTP biosynthesis. Catalyzes the reductive methylation of 2'-deoxyuridine-5'-monophosphate (dUMP) to 2'-deoxythymidine-5'-monophosphate (dTMP) while utilizing 5,10-methylenetetrahydrofolate (mTHF) as the methyl donor, and NADPH and FADH(2) as the reductant. The chain is Flavin-dependent thymidylate synthase from Pyrococcus furiosus (strain ATCC 43587 / DSM 3638 / JCM 8422 / Vc1).